The following is a 354-amino-acid chain: Protein RecA (354 aa).

67–74 (GPESSGKT) serves as a coordination point for ATP.

Belongs to the RecA family.

It is found in the cytoplasm. Functionally, can catalyze the hydrolysis of ATP in the presence of single-stranded DNA, the ATP-dependent uptake of single-stranded DNA by duplex DNA, and the ATP-dependent hybridization of homologous single-stranded DNAs. It interacts with LexA causing its activation and leading to its autocatalytic cleavage. In Enterobacter agglomerans (Erwinia herbicola), this protein is Protein RecA.